A 507-amino-acid chain; its full sequence is Dihydrolipoyl dehydrogenase 1, mitochondrial (507 aa).

A mitochondrion-targeting transit peptide spans Met1–Phe36. Residues Glu73–Cys82, Lys91, Gly155, and Thr184–Ser186 each bind FAD. A disulfide bond links Cys82 and Cys87. NAD(+)-binding positions include Gly221–Glu228, Glu244, Val278, and Gly313. FAD is bound by residues Asp354 and Met360–His363. His486 functions as the Proton acceptor in the catalytic mechanism.

This sequence belongs to the class-I pyridine nucleotide-disulfide oxidoreductase family. In terms of assembly, homodimer. Part of both the glycine cleavage system composed of four proteins: P, T, L and H and of the pyruvate dehydrogenase complex containing multiple copies of three enzymatic components: pyruvate dehydrogenase (E1), dihydrolipoamide acetyltransferase (E2) and lipoamide dehydrogenase (E3). Requires FAD as cofactor. In terms of processing, S-nytrosylated at unknown positions. Preferentially expressed in leaves, flowers and siliques and at a lower level in roots and stems.

The protein localises to the mitochondrion matrix. It catalyses the reaction N(6)-[(R)-dihydrolipoyl]-L-lysyl-[protein] + NAD(+) = N(6)-[(R)-lipoyl]-L-lysyl-[protein] + NADH + H(+). Its function is as follows. Lipoamide dehydrogenase is a component of the glycine decarboxylase (GDC) or glycine cleavage system as well as of the alpha-ketoacid dehydrogenase complexes. LPD1 is probably the protein most often associated with the glycine decarboxylase complex while LPD2 is probably incorporated into alpha-ketoacid dehydrogenase complexes. In Arabidopsis thaliana (Mouse-ear cress), this protein is Dihydrolipoyl dehydrogenase 1, mitochondrial (LPD1).